We begin with the raw amino-acid sequence, 210 residues long: Imidazole glycerol phosphate synthase subunit HisH (210 aa).

Residues 3–210 enclose the Glutamine amidotransferase type-1 domain; that stretch reads TIAIIDYGMG…ILKNFALSKA (208 aa). The active-site Nucleophile is Cys-81. Catalysis depends on residues His-190 and Glu-192.

As to quaternary structure, heterodimer of HisH and HisF.

The protein localises to the cytoplasm. It catalyses the reaction 5-[(5-phospho-1-deoxy-D-ribulos-1-ylimino)methylamino]-1-(5-phospho-beta-D-ribosyl)imidazole-4-carboxamide + L-glutamine = D-erythro-1-(imidazol-4-yl)glycerol 3-phosphate + 5-amino-1-(5-phospho-beta-D-ribosyl)imidazole-4-carboxamide + L-glutamate + H(+). It carries out the reaction L-glutamine + H2O = L-glutamate + NH4(+). Its pathway is amino-acid biosynthesis; L-histidine biosynthesis; L-histidine from 5-phospho-alpha-D-ribose 1-diphosphate: step 5/9. Its function is as follows. IGPS catalyzes the conversion of PRFAR and glutamine to IGP, AICAR and glutamate. The HisH subunit catalyzes the hydrolysis of glutamine to glutamate and ammonia as part of the synthesis of IGP and AICAR. The resulting ammonia molecule is channeled to the active site of HisF. This chain is Imidazole glycerol phosphate synthase subunit HisH, found in Geobacter metallireducens (strain ATCC 53774 / DSM 7210 / GS-15).